Here is a 142-residue protein sequence, read N- to C-terminus: Large ribosomal subunit protein uL13 (142 aa).

It belongs to the universal ribosomal protein uL13 family. In terms of assembly, part of the 50S ribosomal subunit.

Functionally, this protein is one of the early assembly proteins of the 50S ribosomal subunit, although it is not seen to bind rRNA by itself. It is important during the early stages of 50S assembly. This chain is Large ribosomal subunit protein uL13, found in Cupriavidus metallidurans (strain ATCC 43123 / DSM 2839 / NBRC 102507 / CH34) (Ralstonia metallidurans).